A 194-amino-acid polypeptide reads, in one-letter code: ATP-dependent Clp protease proteolytic subunit (194 aa).

S98 serves as the catalytic Nucleophile. H123 is a catalytic residue.

It belongs to the peptidase S14 family. Fourteen ClpP subunits assemble into 2 heptameric rings which stack back to back to give a disk-like structure with a central cavity, resembling the structure of eukaryotic proteasomes.

It is found in the cytoplasm. It carries out the reaction Hydrolysis of proteins to small peptides in the presence of ATP and magnesium. alpha-casein is the usual test substrate. In the absence of ATP, only oligopeptides shorter than five residues are hydrolyzed (such as succinyl-Leu-Tyr-|-NHMec, and Leu-Tyr-Leu-|-Tyr-Trp, in which cleavage of the -Tyr-|-Leu- and -Tyr-|-Trp bonds also occurs).. Functionally, cleaves peptides in various proteins in a process that requires ATP hydrolysis. Has a chymotrypsin-like activity. Plays a major role in the degradation of misfolded proteins. The chain is ATP-dependent Clp protease proteolytic subunit from Staphylococcus epidermidis (strain ATCC 35984 / DSM 28319 / BCRC 17069 / CCUG 31568 / BM 3577 / RP62A).